A 176-amino-acid chain; its full sequence is NAD(P)H-quinone oxidoreductase subunit 6, chloroplastic (176 aa).

The next 5 membrane-spanning stretches (helical) occupy residues 10–30, 33–53, 63–83, 105–125, and 152–172; these read FLLV…VLFT, IFSA…YILA, LLIY…FMSG, ISLF…GIIW, and FFLP…GAIA.

This sequence belongs to the complex I subunit 6 family. As to quaternary structure, NDH is composed of at least 16 different subunits, 5 of which are encoded in the nucleus.

Its subcellular location is the plastid. It localises to the chloroplast thylakoid membrane. The catalysed reaction is a plastoquinone + NADH + (n+1) H(+)(in) = a plastoquinol + NAD(+) + n H(+)(out). It catalyses the reaction a plastoquinone + NADPH + (n+1) H(+)(in) = a plastoquinol + NADP(+) + n H(+)(out). In terms of biological role, NDH shuttles electrons from NAD(P)H:plastoquinone, via FMN and iron-sulfur (Fe-S) centers, to quinones in the photosynthetic chain and possibly in a chloroplast respiratory chain. The immediate electron acceptor for the enzyme in this species is believed to be plastoquinone. Couples the redox reaction to proton translocation, and thus conserves the redox energy in a proton gradient. This is NAD(P)H-quinone oxidoreductase subunit 6, chloroplastic (ndhG) from Spinacia oleracea (Spinach).